We begin with the raw amino-acid sequence, 412 residues long: Putative competence-damage inducible protein (412 aa).

The protein belongs to the CinA family.

This is Putative competence-damage inducible protein from Bacillus cereus (strain B4264).